A 331-amino-acid polypeptide reads, in one-letter code: High-affinity nickel-transport protein NixA (331 aa).

Residues 1 to 5 lie on the Cytoplasmic side of the membrane; that stretch reads MKLWF. A helical membrane pass occupies residues 6 to 26; it reads PYFLAIVFLHALGLALLFMAN. The Periplasmic portion of the chain corresponds to 27 to 33; sequence NASFYAA. The chain crosses the membrane as a helical span at residues 34–54; it reads ASMAYMLGAKHAFDADHIACI. The Cytoplasmic segment spans residues 55–66; the sequence is DNTIRKLTQQGK. A helical transmembrane segment spans residues 67–87; that stretch reads NAYGVGFYFSMGHSSVVILMT. Residues 88-113 lie on the Periplasmic side of the membrane; the sequence is IISAFAIAWAKEHTPMLEEIGGVVGT. A helical membrane pass occupies residues 114–135; sequence LVSGLFLLIIGLLNAIILLDLL. Topologically, residues 136–178 are cytoplasmic; it reads KIFKKSHSNESLSQQQNEEIERLLTSRGLLNRFFKPLFNFVSK. A helical membrane pass occupies residues 179–199; the sequence is SWHIYPIGFLFGLGFDTASEI. Residues 200 to 225 lie on the Periplasmic side of the membrane; it reads ALLALSSSAIKVSMVGMLSLPILFAA. Residues 226–246 traverse the membrane as a helical segment; it reads GMSLFDTLDGAFMLKAYDWAF. Residues 247-252 lie on the Cytoplasmic side of the membrane; that stretch reads KTPLRK. A helical membrane pass occupies residues 253 to 273; the sequence is IYYNISITALSVFIALFIGLI. The Periplasmic segment spans residues 274-302; sequence ELFQVVSEKLHLKFENRLLRALQSLEFTD. Residues 303–322 traverse the membrane as a helical segment; sequence LGYYLVGLFVIAFLGSFFLW. Over 323-331 the chain is Cytoplasmic; that stretch reads KIKFSKLES.

This sequence belongs to the NiCoT transporter (TC 2.A.52) family.

The protein localises to the cell inner membrane. Functionally, high-affinity nickel intake protein. Imports nickel ions in an energy-dependent fashion. Necessary for the expression of catalytically active urease. The sequence is that of High-affinity nickel-transport protein NixA (nixA) from Helicobacter pylori (strain ATCC 700392 / 26695) (Campylobacter pylori).